A 64-amino-acid chain; its full sequence is Translation machinery-associated protein 7 homolog (64 aa).

Residues 1 to 64 form a disordered region; the sequence is MSGRQGGKAK…GGGIKKSGKK (64 aa). Residues 21 to 50 adopt a coiled-coil conformation; sequence DLSEEDVEFKKKQQEEAKKIKEMAAKAGQR. Positions 28-44 are enriched in basic and acidic residues; the sequence is EFKKKQQEEAKKIKEMA. A compositionally biased stretch (gly residues) spans 53–64; sequence LLGGGIKKSGKK.

Belongs to the TMA7 family.

The protein is Translation machinery-associated protein 7 homolog of Caenorhabditis elegans.